The sequence spans 114 residues: Large ribosomal subunit protein uL22 (114 aa).

The protein belongs to the universal ribosomal protein uL22 family. As to quaternary structure, part of the 50S ribosomal subunit.

Functionally, this protein binds specifically to 23S rRNA; its binding is stimulated by other ribosomal proteins, e.g. L4, L17, and L20. It is important during the early stages of 50S assembly. It makes multiple contacts with different domains of the 23S rRNA in the assembled 50S subunit and ribosome. In terms of biological role, the globular domain of the protein is located near the polypeptide exit tunnel on the outside of the subunit, while an extended beta-hairpin is found that lines the wall of the exit tunnel in the center of the 70S ribosome. The polypeptide is Large ribosomal subunit protein uL22 (Streptococcus pyogenes serotype M5 (strain Manfredo)).